The sequence spans 61 residues: Small ribosomal subunit protein uS14B (61 aa).

4 residues coordinate Zn(2+): Cys24, Cys27, Cys40, and Cys43.

It belongs to the universal ribosomal protein uS14 family. Zinc-binding uS14 subfamily. In terms of assembly, part of the 30S ribosomal subunit. Contacts proteins S3 and S10. Requires Zn(2+) as cofactor.

Functionally, binds 16S rRNA, required for the assembly of 30S particles and may also be responsible for determining the conformation of the 16S rRNA at the A site. In Listeria welshimeri serovar 6b (strain ATCC 35897 / DSM 20650 / CCUG 15529 / CIP 8149 / NCTC 11857 / SLCC 5334 / V8), this protein is Small ribosomal subunit protein uS14B.